The chain runs to 1473 residues: MSVKASINNSQEAVSRIAFRCSDALYVVHPNNSILNGALTESLKDLKKFETLNVSGKVPHVLPLKSHADPFAHIADAILAEEEVASTQPKQITSVVASADALFFATPHLYKLAHEPLVAHVAIESTEAFDFASVRDTGFVILFSGNRPGDSSEAALEDTLETASLAHRLALKLNTGVLHFYSPVYDTTAALENIETLPSKEDAQHARVAHIPIEEKQEDSEKEGNIKEAFVPPKFDQPERDAATSEYLESLSIKPFEYSGSDDATDVLLVFGSAASELAKAAVTSSVAVAIVRVLRPWLPSKLQEVLPTSTKRLTVLEPITSLPRKWDPLYLDVLSSFVASGSSIELFAVRYGLSSSEQATEIIKAVRDNLSGALKPSLVCDFTDGVSQVFVPTPPSIEEAYHKLLHRVFKSRLNIVNDPASSATKQNIPSRLIISPQFALGSVLEYENQRRAFCDEVATLLKEKNSSVSSESLEVLSNWIVSVDNLESPVDPELVISELKKDSSAPIKSLLDRSEFFTNVSHWIIGSDAWAYDLGNSALHQVLCLEKNVNLLIVDTQPYSTREAVRSSSRKKDIGLYAMNFGNAYVASTALYSSYTQLISALLEADKFKGPSVVLAYLPYHSADDDAITVLQETKKAVDIGYWPLYRWTPALEDGEYSDFKLDSERIRRELKTFLERDNYLTQLTLRVPSLARTLTQSFGAEVRHQQNVDSRNALNKLIEGLSGPPLTILFASDGGTAENVAKRLQNRASARGSKCKIMAMDDFPIEELGNEKNVVVLVSTAGQGEFPQNGREFWEAIKGADLNLSELKYGVFGFGDYEYWPRKEDKIYYNRPGKQLDARFVELGAAPLVTLGLGNDQDPDGWETAYNLWEPELWKALGLDNVEIDIDEPKPITNEDIKQASNFLRGTIFEGLADESTGALAESDCQLTKFHGIYMQDDRDIRDERKKQGLEPAYGFMIRARMPAGVCTPEQWIAMDDISTKWGNHTLKITTRQTFQWHGVLKKNLRNTIRNIVKVFLTTLGACGDVARNVTCSSTPNNETIHDQLFAVSKQISNELLPTTSSYHEIWIEDPETVEKRKVAGEAVQDVEPLYGPTYLPRKFKVGVAAPPYNDVDVYTNDVALIAIIENDKVLGFNVGIGGGMGTTHNNKKTYPRLATVVGYVLTDKIMEVVKAILIVQRDNGDRENRKHARLKYTVDTLGVSTFVEKVEEVLGYKFEEARDHPQFIKNHDDFEGWHKTEKNKYWRSIFVENGRIENNGILQFKTGLRELAERLYTEKSEAEFRLTANQHVILFNVAENELGWINEHMAKYKLDNNAFSGLRLSSAACVALPTCGLAMAESERYLPKLITKVEEIVYEAGLQKDSIVMRMTGCPNGCSRPWVAEIACVGKAPNTYNLMLGGGFYGQRLNKLYRSSVQEKEILNLLRPLIKRYALEREDGEHFGDWVIRAGIITAVENGGANGAVHEGVSPEAF.

The 149-residue stretch at 728-876 folds into the Flavodoxin-like domain; it reads LTILFASDGG…AYNLWEPELW (149 aa). The [4Fe-4S] cluster site is built by Cys-1328, Cys-1334, Cys-1373, and Cys-1377. Cys-1377 contributes to the siroheme binding site.

This sequence belongs to the nitrite and sulfite reductase 4Fe-4S domain family. Alpha(2)-beta(2). The alpha component is a flavoprotein, the beta component is a hemoprotein. Siroheme is required as a cofactor. [4Fe-4S] cluster serves as cofactor.

It localises to the cytoplasm. The enzyme catalyses hydrogen sulfide + 3 NADP(+) + 3 H2O = sulfite + 3 NADPH + 4 H(+). The protein operates within sulfur metabolism; hydrogen sulfide biosynthesis; hydrogen sulfide from sulfite (NADPH route): step 1/1. In terms of biological role, catalyzes the reduction of sulfite to sulfide, one of several activities required for the biosynthesis of L-cysteine from sulfate. This Schizosaccharomyces pombe (strain 972 / ATCC 24843) (Fission yeast) protein is Sulfite reductase [NADPH] subunit beta (sir1).